Here is a 174-residue protein sequence, read N- to C-terminus: Large ribosomal subunit protein uL10 (174 aa).

The protein belongs to the universal ribosomal protein uL10 family. As to quaternary structure, part of the ribosomal stalk of the 50S ribosomal subunit. The N-terminus interacts with L11 and the large rRNA to form the base of the stalk. The C-terminus forms an elongated spine to which L12 dimers bind in a sequential fashion forming a multimeric L10(L12)X complex.

Functionally, forms part of the ribosomal stalk, playing a central role in the interaction of the ribosome with GTP-bound translation factors. The chain is Large ribosomal subunit protein uL10 from Methylobacillus flagellatus (strain ATCC 51484 / DSM 6875 / VKM B-1610 / KT).